The chain runs to 526 residues: Clostripain (526 aa).

The N-terminal stretch at 1–27 is a signal peptide; that stretch reads MLRRKVSTLLMTALITTSFLNSKPVYA. The propeptide occupies 28–50; the sequence is NPVTKSKDNNLKEVQQVTSKSNK. Positions 182-190 are cleaved as a propeptide — linker; that stretch reads EKSNPRLNR. Catalysis depends on cysteine 231, which acts as the Nucleophile.

It belongs to the peptidase C11 family. In terms of assembly, heterodimer of a light chain and a heavy chain held together by strong non-covalent forces rather than by intramolecular disulfide bridges.

It catalyses the reaction Preferential cleavage: Arg-|-Xaa, including Arg-|-Pro bond, but not Lys-|-Xaa.. Functionally, cysteine endopeptidase with strict specificity. In Hathewaya histolytica (Clostridium histolyticum), this protein is Clostripain (cloSI).